The chain runs to 97 residues: Defensin-like protein 196 (97 aa).

An N-terminal signal peptide occupies residues 1–28; sequence MAKMSALSIFAIFIILVLVIFEIPEIEA. 4 disulfide bridges follow: cysteine 33–cysteine 85, cysteine 46–cysteine 70, cysteine 55–cysteine 80, and cysteine 59–cysteine 82.

This sequence belongs to the DEFL family. Protease inhibitor I18 (RTI/MTI-2) subfamily.

The protein localises to the secreted. This Arabidopsis thaliana (Mouse-ear cress) protein is Defensin-like protein 196 (ATTI4).